The chain runs to 436 residues: Trigger factor (436 aa).

A PPIase FKBP-type domain is found at 163 to 248 (GDRVTVDFEG…VKKIEAAHLP (86 aa)).

This sequence belongs to the FKBP-type PPIase family. Tig subfamily.

It is found in the cytoplasm. The enzyme catalyses [protein]-peptidylproline (omega=180) = [protein]-peptidylproline (omega=0). Its function is as follows. Involved in protein export. Acts as a chaperone by maintaining the newly synthesized protein in an open conformation. Functions as a peptidyl-prolyl cis-trans isomerase. This is Trigger factor from Paracidovorax citrulli (strain AAC00-1) (Acidovorax citrulli).